Reading from the N-terminus, the 248-residue chain is Trypsin I-P38 (248 aa).

The first 15 residues, 1-15, serve as a signal peptide directing secretion; that stretch reads MKFLVLVAFLGVAVA. Residues 16–25 constitute a propeptide, activation peptide; it reads FPISDEDDDK. Residues 26-246 enclose the Peptidase S1 domain; sequence IVGGYSCARS…YVSWIKTTMS (221 aa). Cystine bridges form between Cys-32–Cys-162, Cys-50–Cys-66, Cys-134–Cys-235, Cys-141–Cys-208, Cys-173–Cys-187, and Cys-198–Cys-222. The active-site Charge relay system is His-65. Residues Glu-77, Asn-79, and Glu-87 each coordinate Ca(2+). Asp-109 (charge relay system) is an active-site residue. Residue Ser-202 is the Charge relay system of the active site.

It belongs to the peptidase S1 family. Ca(2+) serves as cofactor. As to expression, high levels are seen in the pancreas while lower levels are found in the liver, spleen and thymus.

It is found in the secreted. The protein resides in the extracellular space. It catalyses the reaction Preferential cleavage: Arg-|-Xaa, Lys-|-Xaa.. The polypeptide is Trypsin I-P38 (Gallus gallus (Chicken)).